Reading from the N-terminus, the 344-residue chain is Probable magnesium transporter NIPA9 (344 aa).

The Cytoplasmic segment spans residues 1-46; sequence MWESICLTLAATAGNNIGKVLQKKGTIILPPLSLKLKVLRAYAENK. 2 consecutive transmembrane segments (helical) span residues 47–67 and 68–88; these read PWALGFLMDIVGALLMLRALS and LAPVSVVQPVSGCGLAILSVF. Residues 89 to 98 lie on the Cytoplasmic side of the membrane; sequence SHFYLKEVMN. A helical membrane pass occupies residues 99–119; the sequence is VFDWIGITVAGIGTIGVGAGG. The Extracellular portion of the chain corresponds to 120–125; it reads EEQEAS. A helical transmembrane segment spans residues 126 to 146; it reads LISVFQLLWLALVVAILFVLL. At 147–166 the chain is on the cytoplasmic side; sequence NAWLHIFKRQRREQELGEYE. Residues 167–187 traverse the membrane as a helical segment; sequence VVEEIIYGLESGILFGMASVV. The Extracellular segment spans residues 188 to 191; the sequence is SKMG. Residues 192–212 form a helical membrane-spanning segment; it reads FVFVEQGFSTMFIPMCISISI. Residues 213 to 231 lie on the Cytoplasmic side of the membrane; sequence CCSGTGFFYQTRGLKHGRA. A helical membrane pass occupies residues 232 to 252; sequence IVVSTCAAVASIVTGVVAGMF. The Extracellular portion of the chain corresponds to 253–265; the sequence is ALGEKLPTSPSGR. The chain crosses the membrane as a helical span at residues 266 to 286; sequence LLLLLGWLLIMLGVVLLVTSS. Topologically, residues 287 to 344 are cytoplasmic; it reads RLIRHLPRSFRRSRQTSLERGFNIRRTTSHTPKDTNPSAVIQAATLHHLLSSPSKDKD.

The protein belongs to the NIPA (TC 2.A.7) family. Homodimer.

It is found in the cell membrane. The protein localises to the early endosome. Its function is as follows. Acts as a Mg(2+) transporter. Can also transport other divalent cations such as Fe(2+), Sr(2+), Ba(2+), Mn(2+) and Co(2+) but to a much less extent than Mg(2+). This Arabidopsis thaliana (Mouse-ear cress) protein is Probable magnesium transporter NIPA9.